Reading from the N-terminus, the 36-residue chain is Hemoglobin subunit beta (36 aa).

In terms of domain architecture, Globin spans 1–36 (VCVLAHHFGKEFTPQVQAAYQKVVAGVANALAHKYH). Position 34 is an N6-acetyllysine (lysine 34).

The protein belongs to the globin family. Heterotetramer of two alpha chains and two beta chains. In terms of tissue distribution, red blood cells.

Functionally, involved in oxygen transport from the lung to the various peripheral tissues. This chain is Hemoglobin subunit beta (HBB), found in Pongo pygmaeus (Bornean orangutan).